A 227-amino-acid chain; its full sequence is Cleavage and polyadenylation specificity factor subunit 5 (227 aa).

Ser2 bears the N-acetylserine mark. Residues 2–147 form a necessary for RNA-binding region; that stretch reads SVVPPNRSQT…DWVIDDCIGN (146 aa). Arg15 bears the Omega-N-methylarginine mark. Lys23 and Lys29 each carry N6-acetyllysine. Tyr40 carries the post-translational modification Phosphotyrosine. Lys56 carries the post-translational modification N6-acetyllysine. The Nudix hydrolase domain maps to 76 to 201; it reads MRRTVEGVLI…KLVAAPLFEL (126 aa). Residues 81–160 form a necessary for interactions with PAPOLA and PABPN1 region; the sequence is EGVLIVHEHR…PNFEPPQYPY (80 aa). The segment at 102–104 is interaction with RNA; the sequence is TFF. The short motif at 109–130 is the Nudix box element; the sequence is GELNPGEDEVEGLKRLMTEILG.

This sequence belongs to the Nudix hydrolase family. CPSF5 subfamily. As to quaternary structure, homodimer (via N- and C-terminus); binds RNA as homodimer. Component of the cleavage factor Im (CFIm) complex which is a heterotetramer composed of two subunits of NUDT21/CPSF5 and two subunits of CPSF6 or CPSF7 or a heterodimer of CPSF6 and CPSF7. The cleavage factor Im (CFIm) complex associates with the CPSF and CSTF complexes to promote the assembly of the core mRNA 3'-processing machinery. Interacts with CPSF6 (via the RRM domain); this interaction is direct and enhances binding to RNA. Interacts with CPSF7. Interacts with FIP1L1; this interaction occurs in a RNA sequence-specific manner. Interacts with PABPN1. Interacts (via N-terminus) with PAPOLA (via C-terminus); this interaction is direct and diminished by acetylation. Interacts with SNRNP70. Interacts with VIRMA. Post-translationally, acetylated mainly by p300/CBP, recruited to the complex by CPSF6. Acetylation decreases interaction with PAPAO. Deacetylated by the class I/II HDACs, HDAC1, HDAC3 and HDAC10, and by the class III HDACs, SIRT1 and SIRT2. In terms of tissue distribution, expressed in testis. Expressed in male germ cells (at protein level).

It localises to the nucleus. It is found in the cytoplasm. In terms of biological role, component of the cleavage factor Im (CFIm) complex that functions as an activator of the pre-mRNA 3'-end cleavage and polyadenylation processing required for the maturation of pre-mRNA into functional mRNAs. CFIm contributes to the recruitment of multiprotein complexes on specific sequences on the pre-mRNA 3'-end, so called cleavage and polyadenylation signals (pA signals). Most pre-mRNAs contain multiple pA signals, resulting in alternative cleavage and polyadenylation (APA) producing mRNAs with variable 3'-end formation. The CFIm complex acts as a key regulator of cleavage and polyadenylation site choice during APA through its binding to 5'-UGUA-3' elements localized in the 3'-untranslated region (UTR) for a huge number of pre-mRNAs. NUDT21/CPSF5 activates indirectly the mRNA 3'-processing machinery by recruiting CPSF6 and/or CPSF7. Binds to 5'-UGUA-3' elements localized upstream of pA signals that act as enhancers of pre-mRNA 3'-end processing. The homodimer mediates simultaneous sequence-specific recognition of two 5'-UGUA-3' elements within the pre-mRNA. Plays a role in somatic cell fate transitions and pluripotency by regulating widespread changes in gene expression through an APA-dependent function. Binds to chromatin. Binds to, but does not hydrolyze mono- and di-adenosine nucleotides. In Mus musculus (Mouse), this protein is Cleavage and polyadenylation specificity factor subunit 5.